Reading from the N-terminus, the 525-residue chain is Heat shock factor protein 1 (525 aa).

Met-1 bears the N-acetylmethionine mark. Residues 15-120 (VPAFLTKLWT…LLENIKRKVT (106 aa)) form a DNA-binding domain region. Lys-80 carries the N6-acetyllysine modification. Lys-91 is modified (N6-acetyllysine; alternate). A Glycyl lysine isopeptide (Lys-Gly) (interchain with G-Cter in SUMO2); alternate cross-link involves residue Lys-91. Lys-118 is subject to N6-acetyllysine. Phosphoserine; by MAPKAPK2 is present on Ser-121. The tract at residues 130 to 203 (IKIRQDSVTK…ISLVQSNRIL (74 aa)) is hydrophobic repeat HR-A/B. Residue Lys-131 forms a Glycyl lysine isopeptide (Lys-Gly) (interchain with G-Cter in SUMO2) linkage. Thr-142 is subject to Phosphothreonine; by CK2. Lys-150 and Lys-188 each carry N6-acetyllysine. The interval 203-224 (LGVKRKIPLMLNDGGPAHPMPK) is d domain. An N6-acetyllysine; alternate modification is found at Lys-208. A Glycyl lysine isopeptide (Lys-Gly) (interchain with G-Cter in SUMO2); alternate cross-link involves residue Lys-208. The interval 221–310 (PMPKYGRQYS…PPSPPQSPRA (90 aa)) is regulatory domain. Residue Lys-224 forms a Glycyl lysine isopeptide (Lys-Gly) (interchain with G-Cter in SUMO2) linkage. The residue at position 230 (Ser-230) is a Phosphoserine; by CAMK2A. The segment at 266–365 (SDITELAPGS…RPPSPLPASA (100 aa)) is disordered. Over residues 272–283 (APGSPVASSGGS) the composition is skewed to low complexity. Phosphoserine occurs at positions 275 and 292. Lys-298 carries the N6-acetyllysine; alternate modification. Residue Lys-298 forms a Glycyl lysine isopeptide (Lys-Gly) (interchain with G-Cter in SUMO2); alternate linkage. A Glycyl lysine isopeptide (Lys-Gly) (interchain with G-Cter in SUMO); alternate cross-link involves residue Lys-298. Ser-303 carries the post-translational modification Phosphoserine; by GSK3-beta. Ser-307 bears the Phosphoserine; by MAPK3 mark. 2 positions are modified to phosphoserine: Ser-314 and Ser-319. Residue Ser-320 is modified to Phosphoserine; by PKA. Thr-324 bears the Phosphothreonine mark. Ser-327 carries the post-translational modification Phosphoserine; by MAPK12. Ser-346 carries the phosphoserine modification. The residue at position 359 (Ser-359) is a Phosphoserine; by MAPK8. The tract at residues 367–525 (EKCLSVACLD…PPKAKDPTVS (159 aa)) is transactivation domain. Positions 380–405 (LSDHLDAMDSNLDNLQTMLTSHGFSV) are hydrophobic repeat HR-C. The 9aaTAD signature appears at 408–416 (STLLDLFSP). The residue at position 415 (Ser-415) is a Phosphoserine; by PLK1. Ser-440 carries the post-translational modification Phosphoserine. A disordered region spans residues 495 to 525 (YFSEGDDYSDDPTISLLTGSEPPKAKDPTVS). Lys-520 is modified (N6-acetyllysine).

Belongs to the HSF family. In terms of assembly, monomer; cytoplasmic latent and transcriptionally inactive monomeric form in unstressed cells. Homotrimer; in response to stress, such as heat shock, homotrimerizes and translocates into the nucleus, binds to heat shock element (HSE) sequences in promoter of heat shock protein (HSP) genes and acquires transcriptional ability. Interacts (via monomeric form) with FKBP4; this interaction occurs in unstressed cells. Associates (via monomeric form) with HSP90 proteins in a multichaperone complex in unnstressed cell; this association maintains HSF1 in a non-DNA-binding and transcriptional inactive form by preventing HSF1 homotrimerization. Homotrimeric transactivation activity is modulated by protein-protein interactions and post-translational modifications. Interacts with HSP90AA1; this interaction is decreased in a IER5-dependent manner, promoting HSF1 accumulation in the nucleus, homotrimerization and DNA-binding activities. Part (via regulatory domain in the homotrimeric form) of a large heat shock-induced HSP90-dependent multichaperone complex at least composed of FKBP4, FKBP5, HSP90 proteins, PPID, PPP5C and PTGES3; this association maintains the HSF1 homotrimeric DNA-bound form in a transcriptionally inactive form. Interacts with BAG3 (via BAG domain); this interaction occurs in normal and heat-shocked cells promoting nuclear shuttling of HSF1 in a BAG3-dependent manner. Interacts (via homotrimeric and hyperphosphorylated form) with FKBP4; this interaction occurs upon heat shock in a HSP90-dependent multichaperone complex. Interacts (via homotrimeric form preferentially) with EEF1A proteins. In heat shocked cells, stress-denatured proteins compete with HSF1 homotrimeric DNA-bound form for association of the HSP90-dependent multichaperone complex, and hence alleviating repression of HSF1-mediated transcriptional activity. Interacts (via homotrimeric form preferentially) with DAXX; this interaction relieves homotrimeric HSF1 from repression of its transcriptional activity by HSP90-dependent multichaperone complex upon heat shock. Interacts (via D domain and preferentially with hyperphosphorylated form) with JNK1; this interaction occurs under both normal growth conditions and immediately upon heat shock. Interacts (via D domain and preferentially with hyperphosphorylated form) with MAPK3; this interaction occurs upon heat shock. Interacts with IER5 (via central region); this interaction promotes PPP2CA-induced dephosphorylation on Ser-121, Ser-307, Ser-314 and Thr-324 and HSF1 transactivation activity. Found in a ribonucleoprotein complex composed of the HSF1 homotrimeric form, translation elongation factor eEF1A proteins and non-coding RNA heat shock RNA-1 (HSR1); this complex occurs upon heat shock and stimulates HSF1 DNA-binding activity. Interacts (via transactivation domain) with HSPA1A/HSP70 and DNAJB1; these interactions result in the inhibition of heat shock- and HSF1-induced transcriptional activity during the attenuation and recovery phase from heat shock. Interacts (via Ser-303 and Ser-307 phosphorylated form) with YWHAE; this interaction promotes HSF1 sequestration in the cytoplasm in an ERK-dependent manner. Found in a complex with IER5 and PPP2CA. Interacts with TPR; this interaction increases upon heat shock and stimulates export of HSP70 mRNA. Interacts with SYMPK (via N-terminus) and CSTF2; these interactions occur upon heat shock. Interacts (via transactivation domain) with HSPA8. Interacts with EEF1D; this interaction occurs at heat shock promoter element (HSE) sequences. Interacts with MAPKAPK2. Interacts with PRKACA/PKA. Interacts (via transactivation domain) with GTF2A2. Interacts (via transactivation domain) with GTF2B. Interacts (via transactivation domain) with TBP. Interacts with CDK9, CCNT1 and EP300. Interacts (via N-terminus) with XRCC5 (via N-terminus) and XRCC6 (via N-terminus); these interactions are direct and prevent XRCC5/XRCC6 heterodimeric binding and non-homologous end joining (NHEJ) repair activities induced by ionizing radiation (IR). Interacts with PLK1; this interaction occurs during the early mitotic period, increases upon heat shock but does not modulate neither HSF1 homotrimerization and DNA-binding activities. Interacts with CDC20; this interaction occurs in mitosis in a MAD2L1-dependent manner and prevents PLK1-stimulated degradation of HSF1 by blocking the recruitment of the SCF(BTRC) ubiquitin ligase complex. Interacts with MAD2L1; this interaction occurs in mitosis. Interacts with BTRC; this interaction occurs during mitosis, induces its ubiquitin-dependent degradation following stimulus-dependent phosphorylation, a process inhibited by CDC20. Interacts with HSP90AA1 and HSP90AB1. Forms a complex with TTC5/STRAP and p300/EP300; these interactions augment chromatin-bound HSF1 and p300/EP300 histone acetyltransferase activity. Post-translationally, phosphorylated. Phosphorylated in unstressed cells; this phosphorylation is constitutive and implicated in the repression of HSF1 transcriptional activity. Phosphorylated on Ser-121 by MAPKAPK2; this phosphorylation promotes interaction with HSP90 proteins and inhibits HSF1 homotrimerization, DNA-binding and transactivation activities. Phosphorylation on Ser-303 by GSK3B/GSK3-beta and on Ser-307 by MAPK3 within the regulatory domain is involved in the repression of HSF1 transcriptional activity and occurs in a RAF1-dependent manner. Phosphorylation on Ser-303 and Ser-307 increases HSF1 nuclear export in a YWHAE- and XPO1/CRM1-dependent manner. Phosphorylation on Ser-307 is a prerequisite for phosphorylation on Ser-303. According to, Ser-303 is not phosphorylated in unstressed cells. Phosphorylated on Ser-415 by PLK1; phosphorylation promotes nuclear translocation upon heat shock. Hyperphosphorylated upon heat shock and during the attenuation and recovery phase period of the heat shock response. Phosphorylated on Thr-142; this phosphorylation increases HSF1 transactivation activity upon heat shock. Phosphorylation on Ser-230 by CAMK2A; this phosphorylation enhances HSF1 transactivation activity upon heat shock. Phosphorylation on Ser-327 by MAPK12; this phosphorylation enhances HSF1 nuclear translocation, homotrimerization and transactivation activities upon heat shock. Phosphorylated on Ser-320 by PRKACA/PKA; this phosphorylation promotes nuclear localization and transcriptional activity upon heat shock. Phosphorylated on Ser-359 by MAPK8; this phosphorylation occurs upon heat shock, induces HSF1 translocation into nuclear stress bodies and negatively regulates transactivation activity. Neither basal nor stress-inducible phosphorylation on Ser-230, Ser-292, Ser-303, Ser-307, Ser-314, Ser-319, Ser-320, Thr-324, Ser-327, Ser-339, Ser-346, Ser-359 and Ser-364 within the regulatory domain is involved in the regulation of HSF1 subcellular localization or DNA-binding activity; however, it negatively regulates HSF1 transactivation activity. Phosphorylated by PLK1 in the early mitotic period; this phosphorylation regulates HSF1 localization to the spindle pole, the recruitment of the SCF(BTRC) ubiquitin ligase complex inducing HSF1 degradation, and hence mitotic progression. Dephosphorylated on Ser-121, Ser-307, Ser-314, Thr-324 by phosphatase PPP2CA in an IER5-dependent manner, leading to HSF1-mediated transactivation activity. In terms of processing, sumoylated with SUMO1 and SUMO2 upon heat shock in a ERK2-dependent manner. Sumoylated by SUMO1 on Lys-298; sumoylation occurs upon heat shock and promotes its localization to nuclear stress bodies and DNA-binding activity. Phosphorylation on Ser-303 and Ser-307 is probably a prerequisite for sumoylation. Acetylated on Lys-118; this acetylation is decreased in a IER5-dependent manner. Acetylated on Lys-118, Lys-208 and Lys-298; these acetylations occur in a EP300-dependent manner. Acetylated on Lys-80; this acetylation inhibits DNA-binding activity upon heat shock. Deacetylated on Lys-80 by SIRT1; this deacetylation increases DNA-binding activity. Post-translationally, ubiquitinated by SCF(BTRC) and degraded following stimulus-dependent phosphorylation by PLK1 in mitosis. Polyubiquitinated. Undergoes proteasomal degradation upon heat shock and during the attenuation and recovery phase period of the heat shock response.

It localises to the nucleus. It is found in the cytoplasm. The protein resides in the nucleoplasm. The protein localises to the perinuclear region. Its subcellular location is the cytoskeleton. It localises to the spindle pole. It is found in the microtubule organizing center. The protein resides in the centrosome. The protein localises to the chromosome. Its subcellular location is the centromere. It localises to the kinetochore. Functions as a stress-inducible and DNA-binding transcription factor that plays a central role in the transcriptional activation of the heat shock response (HSR), leading to the expression of a large class of molecular chaperones, heat shock proteins (HSPs), that protect cells from cellular insult damage. In unstressed cells, is present in a HSP90-containing multichaperone complex that maintains it in a non-DNA-binding inactivated monomeric form. Upon exposure to heat and other stress stimuli, undergoes homotrimerization and activates HSP gene transcription through binding to site-specific heat shock elements (HSEs) present in the promoter regions of HSP genes. Upon heat shock stress, forms a chromatin-associated complex with TTC5/STRAP and p300/EP300 to stimulate HSR transcription, therefore increasing cell survival. Activation is reversible, and during the attenuation and recovery phase period of the HSR, returns to its unactivated form. Binds to inverted 5'-NGAAN-3' pentamer DNA sequences. Binds to chromatin at heat shock gene promoters. Activates transcription of transcription factor FOXR1 which in turn activates transcription of the heat shock chaperones HSPA1A and HSPA6 and the antioxidant NADPH-dependent reductase DHRS2. Also serves several other functions independently of its transcriptional activity. Involved in the repression of Ras-induced transcriptional activation of the c-fos gene in heat-stressed cells. Positively regulates pre-mRNA 3'-end processing and polyadenylation of HSP70 mRNA upon heat-stressed cells in a symplekin (SYMPK)-dependent manner. Plays a role in nuclear export of stress-induced HSP70 mRNA. Plays a role in the regulation of mitotic progression. Also plays a role as a negative regulator of non-homologous end joining (NHEJ) repair activity in a DNA damage-dependent manner. Involved in stress-induced cancer cell proliferation in a IER5-dependent manner. This Bos taurus (Bovine) protein is Heat shock factor protein 1.